A 353-amino-acid polypeptide reads, in one-letter code: MKVLGIESSCDETGVAVYDTALSGVPALRAHAVYSQIALHAEYGGVVPELASRDHVRKLLPLIRQTLGEAGLRIDELDGVAYTAGPGLVGALLVGAGVARSLAWALDVPAIGVHHMEGHLLAPLMEDDPPQAPFVALLVSGGHTQLVSVKALGSYEVLGETLDDAAGEAFDKTAKMMGLPYPGGPQLAALAETGTPGRYKFARPMTDRPGLDFSFSGLKTQVLLAWRSSDQSDTTRADIARGFEDAVVETLAIKCLRALDAAGCNTLVVAGGVGANKRLRARLQEAAQRRGGRVCFPRPALCTDNGAMIAFAGALRLQAGEHADAAVHVTPRWDMACLPPLAAARESGVGNRE.

Residues histidine 115 and histidine 119 each contribute to the Fe cation site. Residues 138–142 (LVSGG), aspartate 171, glycine 184, and asparagine 276 each bind substrate. Aspartate 304 is a Fe cation binding site.

It belongs to the KAE1 / TsaD family. Fe(2+) is required as a cofactor.

The protein resides in the cytoplasm. It carries out the reaction L-threonylcarbamoyladenylate + adenosine(37) in tRNA = N(6)-L-threonylcarbamoyladenosine(37) in tRNA + AMP + H(+). Functionally, required for the formation of a threonylcarbamoyl group on adenosine at position 37 (t(6)A37) in tRNAs that read codons beginning with adenine. Is involved in the transfer of the threonylcarbamoyl moiety of threonylcarbamoyl-AMP (TC-AMP) to the N6 group of A37, together with TsaE and TsaB. TsaD likely plays a direct catalytic role in this reaction. This chain is tRNA N6-adenosine threonylcarbamoyltransferase, found in Xanthomonas euvesicatoria pv. vesicatoria (strain 85-10) (Xanthomonas campestris pv. vesicatoria).